Here is a 267-residue protein sequence, read N- to C-terminus: Expansin-B1 (267 aa).

Residues 1 to 22 (MASSSLLLACVVVAAMVSAVSC) form the signal peptide. A glycan (N-linked (GlcNAc...) asparagine) is linked at Asn-32. Residues 61–167 (GGACGYKDVD…RRVKCKYPAD (107 aa)) enclose the Expansin-like EG45 domain. Intrachain disulfides connect Cys-64–Cys-92, Cys-95–Cys-162, and Cys-100–Cys-106. Residues 181–262 (NYLALLVKYV…GWKADSVYKS (82 aa)) form the Expansin-like CBD domain.

Belongs to the expansin family. Expansin B subfamily. In terms of tissue distribution, expressed in mature anthers but not in vegetative or other floral tissues.

It is found in the secreted. The protein resides in the cell wall. Its subcellular location is the membrane. In terms of biological role, may cause loosening and extension of plant cell walls by disrupting non-covalent bonding between cellulose microfibrils and matrix glucans. No enzymatic activity has been found. May be required for rapid internodal elongation in deepwater rice during submergence. This is Expansin-B1 (EXPB1a) from Oryza sativa subsp. japonica (Rice).